The sequence spans 369 residues: Phenylalanine--tRNA ligase alpha subunit (369 aa).

A Mg(2+)-binding site is contributed by Glu269.

The protein belongs to the class-II aminoacyl-tRNA synthetase family. Phe-tRNA synthetase alpha subunit type 1 subfamily. In terms of assembly, tetramer of two alpha and two beta subunits. Mg(2+) serves as cofactor.

It localises to the cytoplasm. It carries out the reaction tRNA(Phe) + L-phenylalanine + ATP = L-phenylalanyl-tRNA(Phe) + AMP + diphosphate + H(+). In Brucella canis (strain ATCC 23365 / NCTC 10854 / RM-666), this protein is Phenylalanine--tRNA ligase alpha subunit.